A 315-amino-acid polypeptide reads, in one-letter code: Ester hydrolase C11orf54 homolog (315 aa).

Zn(2+) is bound by residues His-266, His-268, and His-278.

As to quaternary structure, monomer. Zn(2+) serves as cofactor.

The protein resides in the nucleus. It is found in the cytoplasm. Functionally, exhibits ester hydrolase activity on the substrate p-nitrophenyl acetate, in vitro. Regulates DNA damage and repair by regulating HIF1A degradation via chaperone-mediated autophagy (CMA). This Mus musculus (Mouse) protein is Ester hydrolase C11orf54 homolog.